The sequence spans 1134 residues: Protocadherin-18 (1134 aa).

Positions 1–27 (MYQMNAKMHFTFVFALLVVSFNLDVLG) are cleaved as a signal peptide. Cadherin domains follow at residues 28 to 137 (KNLK…SPQF), 138 to 246 (SRSL…SPAF), 247 to 354 (EQQS…KPEI), 361 to 465 (PGKE…PPHF), 466 to 576 (QRSR…VPVV), and 582 to 697 (RNNT…APLD). Residues 28-699 (KNLKYRIYEE…SVSQAPLDVS (672 aa)) lie on the Extracellular side of the membrane. N-linked (GlcNAc...) asparagine glycosylation is present at asparagine 103. Asparagine 269 is a glycosylation site (N-linked (GlcNAc...) asparagine). Asparagine 559 carries N-linked (GlcNAc...) asparagine glycosylation. The helical transmembrane segment at 700-720 (MIIIISLGAICAVLLVIMVLF) threads the bilayer. Residues 721-1134 (ATRCNREKKD…NKLLQDVRQS (414 aa)) are Cytoplasmic-facing. 3 disordered regions span residues 768-800 (TLPI…NSHQ), 868-888 (SLKD…DLGR), and 941-1003 (DYRS…TSSL). Residues 791–800 (GSRQSHNSHQ) are compositionally biased toward polar residues. Residues 868–877 (SLKDSGRGDS) are compositionally biased toward basic and acidic residues. The tract at residues 892 to 1134 (IDRLLGEGFS…NKLLQDVRQS (243 aa)) is interaction with DAB1.

In terms of assembly, interacts with DAB1.

The protein localises to the cell membrane. Its function is as follows. Potential calcium-dependent cell-adhesion protein. The chain is Protocadherin-18 (PCDH18) from Bos taurus (Bovine).